Consider the following 447-residue polypeptide: Probable protein phosphatase 2C 71 (447 aa).

Residues 33-279 (SYGYASSAGK…DNITCVVVRF (247 aa)) enclose the PPM-type phosphatase domain. Residues D69, G70, D231, and D270 each contribute to the Mn(2+) site. Over residues 284-297 (SANNNGSSSSEEAN) the composition is skewed to low complexity. Positions 284-447 (SANNNGSSSS…ARKTTPSIFN (164 aa)) are disordered. The segment covering 305 to 331 (NDSDHKISAKETNQDHTTVNKDLDRNT) has biased composition (basic and acidic residues). Composition is skewed to polar residues over residues 346–374 (ADNS…TGEK) and 392–423 (KVPN…GSTG). Residues 424–438 (ERNRKPIKVHSDSAA) show a composition bias toward basic and acidic residues.

It belongs to the PP2C family. Mg(2+) is required as a cofactor. It depends on Mn(2+) as a cofactor.

The catalysed reaction is O-phospho-L-seryl-[protein] + H2O = L-seryl-[protein] + phosphate. It catalyses the reaction O-phospho-L-threonyl-[protein] + H2O = L-threonyl-[protein] + phosphate. This Arabidopsis thaliana (Mouse-ear cress) protein is Probable protein phosphatase 2C 71.